A 174-amino-acid chain; its full sequence is Probable E3 ubiquitin-protein ligase RHA4A (174 aa).

The RING-type; atypical zinc-finger motif lies at 105–147; it reads CCVCLGEFELKEELVEMPLCKHIFHLDCIHLWLYSHNTCPLCR. The disordered stretch occupies residues 155–174; it reads TKTSVDDDNDHPDSPQTSPV.

Expressed in stems, flowers, cauline leaves and roots.

It catalyses the reaction S-ubiquitinyl-[E2 ubiquitin-conjugating enzyme]-L-cysteine + [acceptor protein]-L-lysine = [E2 ubiquitin-conjugating enzyme]-L-cysteine + N(6)-ubiquitinyl-[acceptor protein]-L-lysine.. The protein operates within protein modification; protein ubiquitination. Functionally, probable E3 ubiquitin-protein ligase that may possess E3 ubiquitin ligase activity in vitro. The polypeptide is Probable E3 ubiquitin-protein ligase RHA4A (Arabidopsis thaliana (Mouse-ear cress)).